The sequence spans 151 residues: Deoxyuridine 5'-triphosphate nucleotidohydrolase (151 aa).

Substrate-binding positions include 70-72, N83, 87-89, and M97; these read RSG and LID.

This sequence belongs to the dUTPase family. It depends on Mg(2+) as a cofactor.

It carries out the reaction dUTP + H2O = dUMP + diphosphate + H(+). It functions in the pathway pyrimidine metabolism; dUMP biosynthesis; dUMP from dCTP (dUTP route): step 2/2. Its function is as follows. This enzyme is involved in nucleotide metabolism: it produces dUMP, the immediate precursor of thymidine nucleotides and it decreases the intracellular concentration of dUTP so that uracil cannot be incorporated into DNA. The protein is Deoxyuridine 5'-triphosphate nucleotidohydrolase of Glaesserella parasuis serovar 5 (strain SH0165) (Haemophilus parasuis).